The chain runs to 283 residues: Pantothenate synthetase (283 aa).

ATP is bound at residue 34 to 41; that stretch reads MGALHDGH. Catalysis depends on His41, which acts as the Proton donor. Residue Gln65 coordinates (R)-pantoate. Gln65 serves as a coordination point for beta-alanine. ATP is bound at residue 152–155; that stretch reads GSKD. Gln158 lines the (R)-pantoate pocket. ATP contacts are provided by residues Ile181 and 189 to 192; that span reads MSSR.

It belongs to the pantothenate synthetase family. As to quaternary structure, homodimer.

The protein localises to the cytoplasm. It catalyses the reaction (R)-pantoate + beta-alanine + ATP = (R)-pantothenate + AMP + diphosphate + H(+). It functions in the pathway cofactor biosynthesis; (R)-pantothenate biosynthesis; (R)-pantothenate from (R)-pantoate and beta-alanine: step 1/1. In terms of biological role, catalyzes the condensation of pantoate with beta-alanine in an ATP-dependent reaction via a pantoyl-adenylate intermediate. This Rhodopseudomonas palustris (strain HaA2) protein is Pantothenate synthetase.